The sequence spans 390 residues: Chorismate synthase (390 aa).

NADP(+)-binding residues include Arg-39 and Arg-45. Residues Arg-132–Ser-134, Asn-253–Ala-254, Gly-298, Lys-313–Thr-317, and Arg-339 contribute to the FMN site.

The protein belongs to the chorismate synthase family. In terms of assembly, homotetramer. FMNH2 is required as a cofactor.

The catalysed reaction is 5-O-(1-carboxyvinyl)-3-phosphoshikimate = chorismate + phosphate. It participates in metabolic intermediate biosynthesis; chorismate biosynthesis; chorismate from D-erythrose 4-phosphate and phosphoenolpyruvate: step 7/7. Functionally, catalyzes the anti-1,4-elimination of the C-3 phosphate and the C-6 proR hydrogen from 5-enolpyruvylshikimate-3-phosphate (EPSP) to yield chorismate, which is the branch point compound that serves as the starting substrate for the three terminal pathways of aromatic amino acid biosynthesis. This reaction introduces a second double bond into the aromatic ring system. The protein is Chorismate synthase of Shouchella clausii (strain KSM-K16) (Alkalihalobacillus clausii).